The sequence spans 260 residues: Triosephosphate isomerase (260 aa).

A substrate-binding site is contributed by 11-13 (NWK). His103 acts as the Electrophile in catalysis. Glu175 acts as the Proton acceptor in catalysis. Substrate-binding positions include Gly181, Ser220, and 241-242 (GG).

It belongs to the triosephosphate isomerase family. In terms of assembly, homodimer.

The protein localises to the cytoplasm. The catalysed reaction is D-glyceraldehyde 3-phosphate = dihydroxyacetone phosphate. It functions in the pathway carbohydrate biosynthesis; gluconeogenesis. Its pathway is carbohydrate degradation; glycolysis; D-glyceraldehyde 3-phosphate from glycerone phosphate: step 1/1. Its function is as follows. Involved in the gluconeogenesis. Catalyzes stereospecifically the conversion of dihydroxyacetone phosphate (DHAP) to D-glyceraldehyde-3-phosphate (G3P). This is Triosephosphate isomerase from Shewanella piezotolerans (strain WP3 / JCM 13877).